The primary structure comprises 235 residues: Small ribosomal subunit protein uS2c (235 aa).

The protein belongs to the universal ribosomal protein uS2 family.

It is found in the plastid. The protein resides in the chloroplast. The polypeptide is Small ribosomal subunit protein uS2c (rps2) (Anthoceros angustus (Hornwort)).